Here is an 833-residue protein sequence, read N- to C-terminus: Leucine--tRNA ligase (833 aa).

A 'HIGH' region motif is present at residues 41–52; it reads PYPSGAGLHVGH. The 'KMSKS' region motif lies at 610–614; sequence KMSKS. Residue K613 coordinates ATP.

The protein belongs to the class-I aminoacyl-tRNA synthetase family.

It localises to the cytoplasm. The enzyme catalyses tRNA(Leu) + L-leucine + ATP = L-leucyl-tRNA(Leu) + AMP + diphosphate. In Streptococcus suis (strain 05ZYH33), this protein is Leucine--tRNA ligase.